We begin with the raw amino-acid sequence, 212 residues long: Adapter protein MecA 2 (212 aa).

The protein belongs to the MecA family. As to quaternary structure, homodimer.

Enables the recognition and targeting of unfolded and aggregated proteins to the ClpC protease or to other proteins involved in proteolysis. Acts negatively in the development of competence by binding ComK and recruiting it to the ClpCP protease. When overexpressed, inhibits sporulation. Also involved in Spx degradation by ClpC. This Halalkalibacterium halodurans (strain ATCC BAA-125 / DSM 18197 / FERM 7344 / JCM 9153 / C-125) (Bacillus halodurans) protein is Adapter protein MecA 2 (mecA2).